Consider the following 344-residue polypeptide: GDSL esterase/lipase At5g03590 (344 aa).

Positions 1 to 19 (MHYLMKLFFSLSLFFGING) are cleaved as a signal peptide. Residue Ser41 is the Nucleophile of the active site. N-linked (GlcNAc...) asparagine glycosylation is found at Asn126, Asn227, and Asn238. Asp318 is an active-site residue.

The protein belongs to the 'GDSL' lipolytic enzyme family.

Its subcellular location is the secreted. The polypeptide is GDSL esterase/lipase At5g03590 (Arabidopsis thaliana (Mouse-ear cress)).